The chain runs to 256 residues: uncharacterized protein (256 aa).

This is an uncharacterized protein from Treponema pallidum (strain Nichols).